A 275-amino-acid polypeptide reads, in one-letter code: Replication protein A 32 kDa subunit (275 aa).

The segment at 23-47 (MQSPGGFGSPAPTQGEKKSRSRSQQ) is disordered. Positions 76–150 (VTIVGIVRHA…KSVVAFKIAP (75 aa)) form a DNA-binding region, OB.

Belongs to the replication factor A protein 2 family. Component of the replication protein A complex (RPA/RP-A), a heterotrimeric complex composed of RPA1, RPA2 and RPA3. In terms of processing, differentially phosphorylated throughout the cell cycle, becoming phosphorylated at the G1-S transition and dephosphorylated in late mitosis. Phosphorylation increases upon replication fork stalling.

It localises to the nucleus. It is found in the PML body. As part of the heterotrimeric replication protein A complex (RPA/RP-A), binds and stabilizes single-stranded DNA intermediates, that form during DNA replication or upon DNA stress. It prevents their reannealing and in parallel, recruits and activates different proteins and complexes involved in DNA metabolism. Thereby, it plays an essential role both in DNA replication and the cellular response to DNA damage. In Xenopus tropicalis (Western clawed frog), this protein is Replication protein A 32 kDa subunit (rpa2).